The primary structure comprises 127 residues: UPF0738 protein Bsph_1225 (127 aa).

It belongs to the UPF0738 family.

In Lysinibacillus sphaericus (strain C3-41), this protein is UPF0738 protein Bsph_1225.